Here is a 416-residue protein sequence, read N- to C-terminus: Serine hydroxymethyltransferase (416 aa).

Residues L118 and 122-124 contribute to the (6S)-5,6,7,8-tetrahydrofolate site; that span reads GHL. K226 is subject to N6-(pyridoxal phosphate)lysine. E242 contacts (6S)-5,6,7,8-tetrahydrofolate.

The protein belongs to the SHMT family. Homodimer. Requires pyridoxal 5'-phosphate as cofactor.

It localises to the cytoplasm. The enzyme catalyses (6R)-5,10-methylene-5,6,7,8-tetrahydrofolate + glycine + H2O = (6S)-5,6,7,8-tetrahydrofolate + L-serine. The protein operates within one-carbon metabolism; tetrahydrofolate interconversion. It participates in amino-acid biosynthesis; glycine biosynthesis; glycine from L-serine: step 1/1. Its function is as follows. Catalyzes the reversible interconversion of serine and glycine with tetrahydrofolate (THF) serving as the one-carbon carrier. This reaction serves as the major source of one-carbon groups required for the biosynthesis of purines, thymidylate, methionine, and other important biomolecules. Also exhibits THF-independent aldolase activity toward beta-hydroxyamino acids, producing glycine and aldehydes, via a retro-aldol mechanism. The polypeptide is Serine hydroxymethyltransferase (Helicobacter pylori (strain HPAG1)).